The chain runs to 188 residues: Elongation factor P (188 aa).

The residue at position 34 (lysine 34) is an N6-(3,6-diaminohexanoyl)-5-hydroxylysine.

It belongs to the elongation factor P family. Post-translationally, is beta-lysylated on the epsilon-amino group of Lys-34 by the combined action of EpmA and EpmB, and then hydroxylated on the C5 position of the same residue by EpmC. Lysylation is critical for the stimulatory effect of EF-P on peptide-bond formation. The lysylation moiety would extend toward the peptidyltransferase center and stabilize the terminal 3-CCA end of the tRNA. The hydroxylation of the C5 position on Lys-34 would allow additional potential stabilizing hydrogen-bond interactions with the P-tRNA.

It is found in the cytoplasm. Its pathway is protein biosynthesis; polypeptide chain elongation. Involved in peptide bond synthesis. Alleviates ribosome stalling that occurs when 3 or more consecutive Pro residues or the sequence PPG is present in a protein, possibly by augmenting the peptidyl transferase activity of the ribosome. Modification of Lys-34 is required for alleviation. The polypeptide is Elongation factor P (Salmonella arizonae (strain ATCC BAA-731 / CDC346-86 / RSK2980)).